We begin with the raw amino-acid sequence, 733 residues long: EF-hand domain-containing family member C2 (733 aa).

3 consecutive DM10 domains span residues 61–168 (DKQV…TKIG), 212–354 (DRKV…RTKY), and 416–523 (ISNT…ERNS).

As to quaternary structure, microtubule inner protein component of sperm flagellar doublet microtubules. Expressed in trachea multiciliated cells.

The protein localises to the cytoplasm. It is found in the cytoskeleton. It localises to the cilium axoneme. The protein resides in the flagellum axoneme. Its function is as follows. Microtubule inner protein (MIP) part of the dynein-decorated doublet microtubules (DMTs) in cilia axoneme, which is required for motile cilia beating. The protein is EF-hand domain-containing family member C2 (EFHC2) of Bos taurus (Bovine).